The following is a 137-amino-acid chain: Protein yippee-like F37A8.5 (137 aa).

The segment at 1 to 20 is disordered; the sequence is MHFRMKVLENSSKHNTPKKQ. Residues 32 to 129 enclose the Yippee domain; that stretch reads RCYSCIHCRA…IELAHMVKDN (98 aa). Zn(2+)-binding residues include Cys-36, Cys-39, Cys-92, and Cys-95.

Belongs to the yippee family.

The polypeptide is Protein yippee-like F37A8.5 (Caenorhabditis elegans).